The primary structure comprises 297 residues: Probable endonuclease 4 (297 aa).

Zn(2+) contacts are provided by His69, His110, Glu145, Asp179, His182, His214, Asp227, His229, and Glu259.

It belongs to the AP endonuclease 2 family. Zn(2+) is required as a cofactor.

The catalysed reaction is Endonucleolytic cleavage to 5'-phosphooligonucleotide end-products.. Endonuclease IV plays a role in DNA repair. It cleaves phosphodiester bonds at apurinic or apyrimidinic (AP) sites, generating a 3'-hydroxyl group and a 5'-terminal sugar phosphate. In Listeria monocytogenes serotype 4b (strain CLIP80459), this protein is Probable endonuclease 4.